The sequence spans 533 residues: Sterol 26-hydroxylase, mitochondrial (533 aa).

A mitochondrion-targeting transit peptide spans 1 to 32 (MAAWSRTRLRWTLLDPRVVGRGLCPQGARAKA). The interval 34–60 (IPAALQAQESTEGPGTGQDRPRLRSPA) is disordered. 5 positions are modified to N6-acetyllysine: lysine 142, lysine 232, lysine 285, lysine 296, and lysine 375. Residues 386–400 (PLLKAVIKETLRLYP) form a sterol-binding region. Position 479 (cysteine 479) interacts with heme. 2 positions are modified to N6-acetyllysine: lysine 512 and lysine 523.

The protein belongs to the cytochrome P450 family. In terms of assembly, interacts with HSP70; this interaction is required for initial targeting to mitochondria. Heme is required as a cofactor. Acetylation of Lys-125 and Lys-285 is observed in liver mitochondria from fasted mice but not from fed mice. In terms of tissue distribution, expressed in the gray and white matter of cerebellum (at protein level).

The protein resides in the mitochondrion inner membrane. The catalysed reaction is 5beta-cholestane-3alpha,7alpha,12alpha-triol + 6 reduced [adrenodoxin] + 3 O2 + 5 H(+) = (25R)-3alpha,7alpha,12alpha-trihydroxy-5beta-cholestan-26-oate + 6 oxidized [adrenodoxin] + 4 H2O. The enzyme catalyses cholestanol + 2 reduced [adrenodoxin] + O2 + 2 H(+) = (25R)-26-hydroxycholestanol + 2 oxidized [adrenodoxin] + H2O. It catalyses the reaction (25R)-3beta-hydroxycholest-5-en-7-one-26-al + 2 reduced [adrenodoxin] + O2 + H(+) = (25R)-3beta-hydroxycholest-5-en-7-one-26-oate + 2 oxidized [adrenodoxin] + H2O. It carries out the reaction (25R)-3beta,26-dihydroxycholest-5-en-7-one + 2 reduced [adrenodoxin] + O2 + 2 H(+) = (25R)-3beta-hydroxycholest-5-en-7-one-26-al + 2 oxidized [adrenodoxin] + 2 H2O. The catalysed reaction is 7-oxocholesterol + 2 reduced [adrenodoxin] + O2 + 2 H(+) = (25R)-3beta,26-dihydroxycholest-5-en-7-one + 2 oxidized [adrenodoxin] + H2O. The enzyme catalyses calciol + 2 reduced [adrenodoxin] + O2 + 2 H(+) = calcidiol + 2 oxidized [adrenodoxin] + H2O. It catalyses the reaction (25R)-5beta-cholestane-3alpha,7alpha,12alpha,26-tetrol + 2 reduced [adrenodoxin] + O2 + 2 H(+) = (25R)-3alpha,7alpha,12alpha-trihydroxy-5beta-cholestan-26-al + 2 oxidized [adrenodoxin] + 2 H2O. It carries out the reaction 2 reduced [adrenodoxin] + cholesterol + O2 + 2 H(+) = (25R)-cholest-5-ene-3beta,26-diol + 2 oxidized [adrenodoxin] + H2O. The catalysed reaction is (25R)-3beta,4beta-dihydroxycholest-5-en-26-al + 2 reduced [adrenodoxin] + O2 + H(+) = (25R)-3beta,4beta-dihydroxycholest-5-en-26-oate + 2 oxidized [adrenodoxin] + H2O. The enzyme catalyses (25R)-4beta,26-dihydroxycholesterol + 2 reduced [adrenodoxin] + O2 + 2 H(+) = (25R)-3beta,4beta-dihydroxycholest-5-en-26-al + 2 oxidized [adrenodoxin] + 2 H2O. It catalyses the reaction 4beta-hydroxycholesterol + 2 reduced [adrenodoxin] + O2 + 2 H(+) = (25R)-4beta,26-dihydroxycholesterol + 2 oxidized [adrenodoxin] + H2O. It carries out the reaction (25R)-3beta-hydroxy-5-cholesten-26-al + 2 reduced [adrenodoxin] + O2 + H(+) = (25R)-3beta-hydroxy-5-cholestenoate + 2 oxidized [adrenodoxin] + H2O. The catalysed reaction is (25R)-cholest-5-ene-3beta,26-diol + 2 reduced [adrenodoxin] + O2 + 2 H(+) = (25R)-3beta-hydroxy-5-cholesten-26-al + 2 oxidized [adrenodoxin] + 2 H2O. The enzyme catalyses (25R)-3alpha,7alpha,12alpha-trihydroxy-5beta-cholestan-26-al + 2 reduced [adrenodoxin] + O2 + H(+) = (25R)-3alpha,7alpha,12alpha-trihydroxy-5beta-cholestan-26-oate + 2 oxidized [adrenodoxin] + H2O. It catalyses the reaction 5beta-cholestane-3alpha,7alpha,12alpha-triol + 2 reduced [adrenodoxin] + O2 + 2 H(+) = (25R)-5beta-cholestane-3alpha,7alpha,12alpha,26-tetrol + 2 oxidized [adrenodoxin] + H2O. It functions in the pathway hormone biosynthesis; cholecalciferol biosynthesis. Its pathway is steroid metabolism; cholesterol degradation. It participates in lipid metabolism; bile acid biosynthesis. Cytochrome P450 monooxygenase that catalyzes regio- and stereospecific hydroxylation of cholesterol and its derivatives. Hydroxylates (with R stereochemistry) the terminal methyl group of cholesterol side-chain in a three step reaction to yield at first a C26 alcohol, then a C26 aldehyde and finally a C26 acid. Regulates cholesterol homeostasis by catalyzing the conversion of excess cholesterol to bile acids via both the 'neutral' (classic) and the 'acid' (alternative) pathways. May also regulate cholesterol homeostasis via generation of active oxysterols, which act as ligands for NR1H2 and NR1H3 nuclear receptors, modulating the transcription of genes involved in lipid metabolism. Plays a role in cholestanol metabolism in the cerebellum. Similarly to cholesterol, hydroxylates cholestanol and may facilitate sterol diffusion through the blood-brain barrier to the systemic circulation for further degradation. Also hydroxylates retinal 7-ketocholesterol, a noxious oxysterol with pro-inflammatory and pro-apoptotic effects, and may play a role in its elimination from the retinal pigment epithelium. May play a redundant role in vitamin D biosynthesis. Catalyzes 25-hydroxylation of vitamin D3 that is required for its conversion to a functionally active form. The chain is Sterol 26-hydroxylase, mitochondrial from Mus musculus (Mouse).